We begin with the raw amino-acid sequence, 488 residues long: Pup--protein ligase (488 aa).

Glutamate 33 provides a ligand contact to Mg(2+). An ATP-binding site is contributed by arginine 76. Tyrosine 78 contacts Mg(2+). Aspartate 80 acts as the Proton acceptor in catalysis. Glutamate 86 contacts Mg(2+). ATP is bound by residues threonine 89 and tryptophan 453.

It belongs to the Pup ligase/Pup deamidase family. Pup-conjugating enzyme subfamily.

It catalyses the reaction ATP + [prokaryotic ubiquitin-like protein]-L-glutamate + [protein]-L-lysine = ADP + phosphate + N(6)-([prokaryotic ubiquitin-like protein]-gamma-L-glutamyl)-[protein]-L-lysine.. It participates in protein degradation; proteasomal Pup-dependent pathway. It functions in the pathway protein modification; protein pupylation. Functionally, catalyzes the covalent attachment of the prokaryotic ubiquitin-like protein modifier Pup to the proteasomal substrate proteins, thereby targeting them for proteasomal degradation. This tagging system is termed pupylation. The ligation reaction involves the side-chain carboxylate of the C-terminal glutamate of Pup and the side-chain amino group of a substrate lysine. This is Pup--protein ligase from Bifidobacterium adolescentis (strain ATCC 15703 / DSM 20083 / NCTC 11814 / E194a).